The primary structure comprises 99 residues: Small ribosomal subunit protein uS19c (99 aa).

Belongs to the universal ribosomal protein uS19 family.

The protein localises to the plastid. It is found in the chloroplast. Functionally, protein S19 forms a complex with S13 that binds strongly to the 16S ribosomal RNA. This is Small ribosomal subunit protein uS19c from Oenothera biennis (German evening primrose).